The primary structure comprises 370 residues: Anthranilate phosphoribosyltransferase (370 aa).

Residues G82, 85–86, T90, 92–95, 110–118, and S122 contribute to the 5-phospho-alpha-D-ribose 1-diphosphate site; these read GD, NVST, and KHGNRAATS. G82 contributes to the anthranilate binding site. Mg(2+) is bound at residue S94. Position 113 (N113) interacts with anthranilate. R168 serves as a coordination point for anthranilate. The Mg(2+) site is built by D226 and E227.

It belongs to the anthranilate phosphoribosyltransferase family. In terms of assembly, homodimer. It depends on Mg(2+) as a cofactor.

The enzyme catalyses N-(5-phospho-beta-D-ribosyl)anthranilate + diphosphate = 5-phospho-alpha-D-ribose 1-diphosphate + anthranilate. Its pathway is amino-acid biosynthesis; L-tryptophan biosynthesis; L-tryptophan from chorismate: step 2/5. Functionally, catalyzes the transfer of the phosphoribosyl group of 5-phosphorylribose-1-pyrophosphate (PRPP) to anthranilate to yield N-(5'-phosphoribosyl)-anthranilate (PRA). The protein is Anthranilate phosphoribosyltransferase of Methanosarcina mazei (strain ATCC BAA-159 / DSM 3647 / Goe1 / Go1 / JCM 11833 / OCM 88) (Methanosarcina frisia).